A 510-amino-acid chain; its full sequence is GMP synthase [glutamine-hydrolyzing] (510 aa).

Residues 5 to 195 (LVIVVDFGGQ…LYEICKADGD (191 aa)) enclose the Glutamine amidotransferase type-1 domain. The active-site Nucleophile is C82. Residues H169 and E171 contribute to the active site. In terms of domain architecture, GMPS ATP-PPase spans 196-385 (WTMENFLEEQ…LEMPEYLVYR (190 aa)). 223 to 229 (SGGVDSS) contributes to the ATP binding site.

As to quaternary structure, homodimer.

It catalyses the reaction XMP + L-glutamine + ATP + H2O = GMP + L-glutamate + AMP + diphosphate + 2 H(+). The protein operates within purine metabolism; GMP biosynthesis; GMP from XMP (L-Gln route): step 1/1. In terms of biological role, catalyzes the synthesis of GMP from XMP. This Finegoldia magna (strain ATCC 29328 / DSM 20472 / WAL 2508) (Peptostreptococcus magnus) protein is GMP synthase [glutamine-hydrolyzing].